The following is a 266-amino-acid chain: Metallo-beta-lactamase VIM-1 (266 aa).

The first 20 residues, 1-20 (MLKVISSLLVYMTASVMAVA), serve as a signal peptide directing secretion. Residues H114, H116, D118, H179, C198, and H240 each coordinate Zn(2+).

It belongs to the metallo-beta-lactamase superfamily. Class-B beta-lactamase family. As to quaternary structure, monomer. It depends on Zn(2+) as a cofactor.

It is found in the periplasm. The enzyme catalyses a beta-lactam + H2O = a substituted beta-amino acid. With respect to regulation, weakly inhibited by beta-lactamase-blocking agent sulbactam. Its function is as follows. Class B beta-lactamase which confers resistance to the beta-lactam antibiotics, including penicillins, cephalosporins and carbapenems. Acts via hydrolysis of the beta-lactam ring. Has penicillin-, cephalosporin- and carbapenem-hydrolyzing activities. The protein is Metallo-beta-lactamase VIM-1 of Pseudomonas aeruginosa (strain ATCC 15692 / DSM 22644 / CIP 104116 / JCM 14847 / LMG 12228 / 1C / PRS 101 / PAO1).